The chain runs to 312 residues: Malate dehydrogenase (312 aa).

NAD(+) contacts are provided by residues 7–13 (GAAGGIG) and aspartate 34. The substrate site is built by arginine 81 and arginine 87. Residues asparagine 94 and 117–119 (ITN) each bind NAD(+). The substrate site is built by asparagine 119 and arginine 153. Histidine 177 acts as the Proton acceptor in catalysis. Methionine 227 is an NAD(+) binding site.

This sequence belongs to the LDH/MDH superfamily. MDH type 1 family. As to quaternary structure, homodimer.

It catalyses the reaction (S)-malate + NAD(+) = oxaloacetate + NADH + H(+). Functionally, catalyzes the reversible oxidation of malate to oxaloacetate. The sequence is that of Malate dehydrogenase from Salmonella arizonae (strain ATCC BAA-731 / CDC346-86 / RSK2980).